Reading from the N-terminus, the 163-residue chain is Ribonuclease P protein subunit p25-like protein (163 aa).

Disordered stretches follow at residues 1–22 (MEHY…PQLP) and 129–163 (NEYG…DTRF). A compositionally biased stretch (basic residues) spans 154–163 (PRRRARDTRF).

The protein belongs to the histone-like Alba family.

It localises to the nucleus. Its function is as follows. May be a component of ribonuclease P or MRP. In Bos taurus (Bovine), this protein is Ribonuclease P protein subunit p25-like protein (RPP25L).